The primary structure comprises 137 residues: Large-conductance mechanosensitive channel (137 aa).

The next 2 helical transmembrane spans lie at 10-30 and 76-96; these read FAMR…AAFG and GVFI…FVAI.

The protein belongs to the MscL family. In terms of assembly, homopentamer.

It localises to the cell inner membrane. Functionally, channel that opens in response to stretch forces in the membrane lipid bilayer. May participate in the regulation of osmotic pressure changes within the cell. The polypeptide is Large-conductance mechanosensitive channel (Salmonella typhimurium (strain LT2 / SGSC1412 / ATCC 700720)).